Here is a 434-residue protein sequence, read N- to C-terminus: Alpha-enolase (434 aa).

Ser-2 carries the N-acetylserine modification. Ser-40 contacts Mg(2+). At Tyr-44 the chain carries Phosphotyrosine. Position 60 is an N6-acetyllysine; alternate (Lys-60). Lys-60 bears the N6-succinyllysine; alternate mark. At Lys-71 the chain carries N6-acetyllysine. The residue at position 89 (Lys-89) is an N6-acetyllysine; alternate. Lys-89 carries the N6-succinyllysine; alternate modification. 2 positions are modified to N6-acetyllysine: Lys-92 and Lys-126. The substrate site is built by His-158 and Glu-167. N6-acetyllysine is present on residues Lys-193 and Lys-199. An N6-acetyllysine; alternate modification is found at Lys-202. Residue Lys-202 forms a Glycyl lysine isopeptide (Lys-Gly) (interchain with G-Cter in SUMO2); alternate linkage. Glu-210 acts as the Proton donor in catalysis. N6-acetyllysine; alternate is present on residues Lys-228 and Lys-233. Position 228 is an N6-succinyllysine; alternate (Lys-228). Lys-228 is modified (N6-(2-hydroxyisobutyryl)lysine; alternate). The residue at position 233 (Lys-233) is an N6-malonyllysine; alternate. Asp-245 is a Mg(2+) binding site. At Ser-254 the chain carries Phosphoserine. Lys-256 carries the post-translational modification N6-acetyllysine. Ser-263 is modified (phosphoserine). At Lys-281 the chain carries N6-acetyllysine; alternate. An N6-(2-hydroxyisobutyryl)lysine; alternate modification is found at Lys-281. Tyr-287 carries the post-translational modification Phosphotyrosine. Ser-291 carries the phosphoserine modification. Mg(2+)-binding residues include Glu-293 and Asp-318. Substrate is bound by residues Glu-293 and Asp-318. N6-acetyllysine is present on residues Lys-335 and Lys-343. The active-site Proton acceptor is the Lys-343. Substrate contacts are provided by residues 370 to 373 (SHRS) and Lys-394. Residues 405–434 (AKYNQILRIEEELGSKAKFAGRSFRNPLAK) form a required for interaction with PLG region. An N6-acetyllysine modification is found at Lys-406. Lys-420 is subject to N6-acetyllysine; alternate. N6-succinyllysine; alternate is present on Lys-420. An N6-malonyllysine; alternate modification is found at Lys-420.

This sequence belongs to the enolase family. As to quaternary structure, mammalian enolase is composed of 3 isozyme subunits, alpha, beta and gamma, which can form homodimers or heterodimers which are cell-type and development-specific. ENO1 interacts with PLG in the neuronal plasma membrane and promotes its activation. The C-terminal lysine is required for this binding. In vitro, interacts with several glycolytic enzymes including PKM, PGM, CKM and aldolase. Also binds troponin, in vitro. Interacts with ENO4 and PGAM2. Interacts with CMTM6. The cofactor is Mg(2+). ISGylated. In terms of processing, lysine 2-hydroxyisobutyrylation (Khib) by p300/EP300 activates the phosphopyruvate hydratase activity. In terms of tissue distribution, testis. Found in the principal piece of sperm tail (at protein level). The alpha/alpha homodimer is expressed in embryo and in most adult tissues. The alpha/beta heterodimer and the beta/beta homodimer are found in striated muscle, and the alpha/gamma heterodimer and the gamma/gamma homodimer in neurons. In striated muscle, expression of ENO1 appears to be independent of fiber type.

It is found in the cytoplasm. The protein resides in the cell membrane. The catalysed reaction is (2R)-2-phosphoglycerate = phosphoenolpyruvate + H2O. The protein operates within carbohydrate degradation; glycolysis; pyruvate from D-glyceraldehyde 3-phosphate: step 4/5. In terms of biological role, glycolytic enzyme the catalyzes the conversion of 2-phosphoglycerate to phosphoenolpyruvate. In addition to glycolysis, involved in various processes such as growth control, hypoxia tolerance and allergic responses. May also function in the intravascular and pericellular fibrinolytic system due to its ability to serve as a receptor and activator of plasminogen on the cell surface of several cell-types such as leukocytes and neurons. Stimulates immunoglobulin production. This Mus musculus (Mouse) protein is Alpha-enolase (Eno1).